Here is a 164-residue protein sequence, read N- to C-terminus: ATP synthase subunit b (164 aa).

A helical membrane pass occupies residues 12-32; that stretch reads FILVTGSVIVLLLLIKAFAWG.

The protein belongs to the ATPase B chain family. F-type ATPases have 2 components, F(1) - the catalytic core - and F(0) - the membrane proton channel. F(1) has five subunits: alpha(3), beta(3), gamma(1), delta(1), epsilon(1). F(0) has three main subunits: a(1), b(2) and c(10-14). The alpha and beta chains form an alternating ring which encloses part of the gamma chain. F(1) is attached to F(0) by a central stalk formed by the gamma and epsilon chains, while a peripheral stalk is formed by the delta and b chains.

The protein resides in the cell membrane. In terms of biological role, f(1)F(0) ATP synthase produces ATP from ADP in the presence of a proton or sodium gradient. F-type ATPases consist of two structural domains, F(1) containing the extramembraneous catalytic core and F(0) containing the membrane proton channel, linked together by a central stalk and a peripheral stalk. During catalysis, ATP synthesis in the catalytic domain of F(1) is coupled via a rotary mechanism of the central stalk subunits to proton translocation. Functionally, component of the F(0) channel, it forms part of the peripheral stalk, linking F(1) to F(0). This Streptococcus equi subsp. zooepidemicus (strain MGCS10565) protein is ATP synthase subunit b.